The chain runs to 285 residues: Nucleotide-binding protein in ptsN-ptsO intergenic region (285 aa).

8 to 15 contacts ATP; the sequence is GRSGSGKS. 60–63 is a GTP binding site; that stretch reads DARN.

Belongs to the RapZ-like family.

In terms of biological role, displays ATPase and GTPase activities. This is Nucleotide-binding protein in ptsN-ptsO intergenic region from Stutzerimonas stutzeri (Pseudomonas stutzeri).